The chain runs to 145 residues: CBS domain-containing protein DDB_G0289609 (145 aa).

2 consecutive CBS domains span residues 9–66 and 84–141; these read MSKS…FLPE and MKQN…LEPV.

The protein is CBS domain-containing protein DDB_G0289609 of Dictyostelium discoideum (Social amoeba).